A 200-amino-acid chain; its full sequence is Imidazole glycerol phosphate synthase subunit HisH (200 aa).

Residues aspartate 3–proline 200 form the Glutamine amidotransferase type-1 domain. Residue cysteine 78 is the Nucleophile of the active site. Catalysis depends on residues histidine 179 and glutamate 181.

Heterodimer of HisH and HisF.

It localises to the cytoplasm. It catalyses the reaction 5-[(5-phospho-1-deoxy-D-ribulos-1-ylimino)methylamino]-1-(5-phospho-beta-D-ribosyl)imidazole-4-carboxamide + L-glutamine = D-erythro-1-(imidazol-4-yl)glycerol 3-phosphate + 5-amino-1-(5-phospho-beta-D-ribosyl)imidazole-4-carboxamide + L-glutamate + H(+). It carries out the reaction L-glutamine + H2O = L-glutamate + NH4(+). It functions in the pathway amino-acid biosynthesis; L-histidine biosynthesis; L-histidine from 5-phospho-alpha-D-ribose 1-diphosphate: step 5/9. IGPS catalyzes the conversion of PRFAR and glutamine to IGP, AICAR and glutamate. The HisH subunit catalyzes the hydrolysis of glutamine to glutamate and ammonia as part of the synthesis of IGP and AICAR. The resulting ammonia molecule is channeled to the active site of HisF. The protein is Imidazole glycerol phosphate synthase subunit HisH of Xanthomonas euvesicatoria pv. vesicatoria (strain 85-10) (Xanthomonas campestris pv. vesicatoria).